The following is a 434-amino-acid chain: Serine hydroxymethyltransferase (434 aa).

(6S)-5,6,7,8-tetrahydrofolate-binding positions include Leu133 and 137–139; that span reads GHL. An N6-(pyridoxal phosphate)lysine modification is found at Lys242.

Belongs to the SHMT family. As to quaternary structure, homodimer. Pyridoxal 5'-phosphate serves as cofactor.

It localises to the cytoplasm. The enzyme catalyses (6R)-5,10-methylene-5,6,7,8-tetrahydrofolate + glycine + H2O = (6S)-5,6,7,8-tetrahydrofolate + L-serine. The protein operates within one-carbon metabolism; tetrahydrofolate interconversion. It participates in amino-acid biosynthesis; glycine biosynthesis; glycine from L-serine: step 1/1. Its function is as follows. Catalyzes the reversible interconversion of serine and glycine with tetrahydrofolate (THF) serving as the one-carbon carrier. This reaction serves as the major source of one-carbon groups required for the biosynthesis of purines, thymidylate, methionine, and other important biomolecules. Also exhibits THF-independent aldolase activity toward beta-hydroxyamino acids, producing glycine and aldehydes, via a retro-aldol mechanism. The sequence is that of Serine hydroxymethyltransferase from Methylobacterium radiotolerans (strain ATCC 27329 / DSM 1819 / JCM 2831 / NBRC 15690 / NCIMB 10815 / 0-1).